The primary structure comprises 832 residues: Protein P (832 aa).

Residues 1 to 177 (MPLSYQHFRR…FCGSPYSWEQ (177 aa)) form a terminal protein domain (TP) region. The segment at 178-335 (ELQHGAESFH…YCLSHIVNLL (158 aa)) is spacer. Residues 186–229 (FHQQSSGILSRPPVGSSLQSKHSKSRLGLQSQQGHLARRQQGRS) are disordered. The tract at residues 336 to 679 (EDWGPCAEHG…YLNLYPVARQ (344 aa)) is polymerase/reverse transcriptase domain (RT). The region spanning 346–589 (EHHIRTPRTP…YSLNFMGYVI (244 aa)) is the Reverse transcriptase domain. Residues aspartate 418, aspartate 540, and aspartate 541 each coordinate Mg(2+).

Belongs to the hepadnaviridae P protein family.

The catalysed reaction is DNA(n) + a 2'-deoxyribonucleoside 5'-triphosphate = DNA(n+1) + diphosphate. It carries out the reaction Endonucleolytic cleavage to 5'-phosphomonoester.. Activated by host HSP70 and HSP40 in vitro to be able to bind the epsilon loop of the pgRNA. Because deletion of the RNase H region renders the protein partly chaperone-independent, the chaperones may be needed indirectly to relieve occlusion of the RNA-binding site by this domain. Inhibited by several reverse-transcriptase inhibitors: Lamivudine, Adefovir and Entecavir. Functionally, multifunctional enzyme that converts the viral RNA genome into dsDNA in viral cytoplasmic capsids. This enzyme displays a DNA polymerase activity that can copy either DNA or RNA templates, and a ribonuclease H (RNase H) activity that cleaves the RNA strand of RNA-DNA heteroduplexes in a partially processive 3'- to 5'-endonucleasic mode. Neo-synthesized pregenomic RNA (pgRNA) are encapsidated together with the P protein, and reverse-transcribed inside the nucleocapsid. Initiation of reverse-transcription occurs first by binding the epsilon loop on the pgRNA genome, and is initiated by protein priming, thereby the 5'-end of (-)DNA is covalently linked to P protein. Partial (+)DNA is synthesized from the (-)DNA template and generates the relaxed circular DNA (RC-DNA) genome. After budding and infection, the RC-DNA migrates in the nucleus, and is converted into a plasmid-like covalently closed circular DNA (cccDNA). The activity of P protein does not seem to be necessary for cccDNA generation, and is presumably released from (+)DNA by host nuclear DNA repair machinery. This is Protein P from Hepatitis B virus genotype D (isolate Germany/1-91/1991) (HBV-D).